The following is a 331-amino-acid chain: Elongation factor Ts, mitochondrial (331 aa).

Residues 1 to 14 (MIVSRQVIRSVVRK) constitute a mitochondrion transit peptide.

This sequence belongs to the EF-Ts family.

The protein resides in the mitochondrion. Functionally, associates with the EF-Tu.GDP complex and induces the exchange of GDP to GTP. It remains bound to the aminoacyl-tRNA.EF-Tu.GTP complex up to the GTP hydrolysis stage on the ribosome. The polypeptide is Elongation factor Ts, mitochondrial (Brugia malayi (Filarial nematode worm)).